Here is a 931-residue protein sequence, read N- to C-terminus: Myocardin-related transcription factor A (931 aa).

The mediates interaction with SCAI and ACTB stretch occupies residues M1–D256. S6 carries the post-translational modification Phosphoserine. An intervening spacer sequence 1 region spans residues S6 to E23. An RPEL 1 repeat occupies D24–S49. A Bipartite Nuclear localization signal motif is present at residues K27–R65. The tract at residues A50–A67 is intervening spacer sequence 2. Residues D68–S93 form an RPEL 2 repeat. Disordered regions lie at residues A110–D256 and P290–P344. Phosphoserine is present on residues S124, S139, and S156. Polar residues predominate over residues S151–S162. Pro residues predominate over residues P180–P189. Positions S191–S215 are enriched in polar residues. The span at A216–P231 shows a compositional bias: basic and acidic residues. A Phosphothreonine modification is found at T305. Phosphoserine occurs at positions 310 and 312. Positions S310 to S320 are enriched in low complexity. T313 is subject to Phosphothreonine. A phosphoserine mark is found at S317, S320, and S333. Positions L347 to Q381 constitute an SAP domain. S385 and S446 each carry phosphoserine. The disordered stretch occupies residues F444 to F476. T447 is subject to Phosphothreonine. S449 bears the Phosphoserine mark. Position 450 is a phosphothreonine (T450). The residue at position 454 (S454) is a Phosphoserine. T456 is modified (phosphothreonine). A Phosphoserine modification is found at S458. The segment covering E459 to G473 has biased composition (polar residues). Residues S482, S492, S507, and S511 each carry the phosphoserine modification. A coiled-coil region spans residues R515 to Q563. Disordered stretches follow at residues E558 to Q577, K674 to Q746, and A763 to D816. Residues S678–G694 show a composition bias toward low complexity. S685, S691, and S695 each carry phosphoserine. Positions M732 to Q746 are enriched in polar residues. A compositionally biased stretch (basic and acidic residues) spans A763 to S778. Residues G784–Q799 show a composition bias toward low complexity. A phosphoserine mark is found at S792, S807, and S859.

Interacts with SRF, forming the SRF-MRTFA nuclear complex which binds the 5'-CArG-3' consensus motif (CArG box) on DNA via SRF. Interacts (via RPEL repeats) with globular actin (G-actin), thereby regulating its subcellular location and activity of the complex formed with SRF. Either forms a trivalent (by binding three G-actin monomers) or pentavalent (by binding five G-actin monomers) complex with G-actin. Forms a nuclear ternary complex with SCAI and SRF, leading to suppress MRTFA-induced SRF transcriptional activity. Interacts with beta-actin (ACTB); interaction with ACTB prevents interaction with SCAI. Interacts with MRTFB. In terms of processing, phosphorylation at Ser-6 by Erk inhibits binding of globular actin (G-actin), unmasking the nuclear localization signal (NLS) and promoting nuclear import. In terms of tissue distribution, ubiquitously expressed, has been detected in lung, placenta, small intestine, liver, kidney, spleen, thymus, colon, muscle, heart and brain. Expressed in peripheral blood mononuclear cells (at protein level).

The protein localises to the cytoplasm. It localises to the nucleus. Transcription coactivator that associates with the serum response factor (SRF) transcription factor to control expression of genes regulating the cytoskeleton during development, morphogenesis and cell migration. The SRF-MRTFA complex activity responds to Rho GTPase-induced changes in cellular globular actin (G-actin) concentration, thereby coupling cytoskeletal gene expression to cytoskeletal dynamics. MRTFA binds G-actin via its RPEL repeats, regulating activity of the MRTFA-SRF complex. Activity is also regulated by filamentous actin (F-actin) in the nucleus. This Homo sapiens (Human) protein is Myocardin-related transcription factor A.